The following is a 373-amino-acid chain: Cytoplasmic envelopment protein 2 (373 aa).

Residues Met-1–Val-35 are disordered. Pro residues predominate over residues Pro-9–Leu-19. Over residues Pro-22–Val-35 the composition is skewed to basic and acidic residues.

The protein belongs to the herpesviridae cytoplasmic envelopment protein 2 family. Interacts with cytoplasmic envelopment protein 3 and with the capsid.

The protein localises to the virion tegument. The protein resides in the host cytoplasm. It localises to the host nucleus. Functionally, plays a critical role in cytoplasmic virus egress. Participates in the final step of tegumentation and envelope acquisition within the host cytoplasm by directly interacting with the capsid. Upon virion binding to target cell, a signaling cascade is triggered to disrupt the interaction with the capsid, thereby preparing capsid uncoating. The polypeptide is Cytoplasmic envelopment protein 2 (UL16) (Homo sapiens (Human)).